Here is a 359-residue protein sequence, read N- to C-terminus: DNA integrity scanning protein DisA (359 aa).

One can recognise a DAC domain in the interval 7–146 (DEVLRQTLAI…NRRYVLEGSD (140 aa)). ATP contacts are provided by residues Gly-74, Leu-92, and 105-109 (TRHRT).

It belongs to the DisA family. As to quaternary structure, homooctamer. Mg(2+) serves as cofactor.

The catalysed reaction is 2 ATP = 3',3'-c-di-AMP + 2 diphosphate. Functionally, participates in a DNA-damage check-point. DisA forms globular foci that rapidly scan along the chromosomes searching for lesions. Its function is as follows. Also has diadenylate cyclase activity, catalyzing the condensation of 2 ATP molecules into cyclic di-AMP (c-di-AMP). c-di-AMP likely acts as a signaling molecule that may couple DNA integrity with a cellular process. This chain is DNA integrity scanning protein DisA, found in Kineococcus radiotolerans (strain ATCC BAA-149 / DSM 14245 / SRS30216).